A 396-amino-acid polypeptide reads, in one-letter code: Na(+)/H(+) antiporter NhaA (396 aa).

A run of 11 helical transmembrane segments spans residues Gly-16–Gly-36, Leu-59–Val-79, Thr-95–Phe-115, Ala-124–Leu-144, Val-154–Phe-174, Gln-178–Asn-198, Leu-213–Val-233, Ala-254–Val-274, Gly-278–Ile-298, Ile-328–Leu-348, and Leu-363–Ala-383.

It belongs to the NhaA Na(+)/H(+) (TC 2.A.33) antiporter family.

The protein localises to the cell inner membrane. It catalyses the reaction Na(+)(in) + 2 H(+)(out) = Na(+)(out) + 2 H(+)(in). In terms of biological role, na(+)/H(+) antiporter that extrudes sodium in exchange for external protons. This Aeromonas hydrophila subsp. hydrophila (strain ATCC 7966 / DSM 30187 / BCRC 13018 / CCUG 14551 / JCM 1027 / KCTC 2358 / NCIMB 9240 / NCTC 8049) protein is Na(+)/H(+) antiporter NhaA.